The following is a 355-amino-acid chain: Undecaprenyl-phosphate alpha-N-acetylglucosaminyl 1-phosphate transferase (355 aa).

A run of 8 helical transmembrane segments spans residues 1–21 (MLSIFVTFLGAFLTLIVMRPL), 39–59 (GTIPLIGGASLFVGNLCYYLM), 63–83 (QLRLPYLYLFSIFVLLAIGIL), 123–143 (FQLTLGSIGLIITVFATIAII), 182–202 (WSFALIVSILPYLMLNLGIPF), 208–228 (VFMGDAGSTLIGFTIIWILLL), 237–257 (MNPVTALWIIAIPLIDMVAII), and 315–335 (WAMFVGFFILFFLYVYSITHA).

This sequence belongs to the glycosyltransferase 4 family. WecA subfamily. Requires Mg(2+) as cofactor. Mn(2+) is required as a cofactor.

It is found in the cell inner membrane. It carries out the reaction di-trans,octa-cis-undecaprenyl phosphate + UDP-N-acetyl-alpha-D-glucosamine = N-acetyl-alpha-D-glucosaminyl-di-trans,octa-cis-undecaprenyl diphosphate + UMP. The protein operates within bacterial outer membrane biogenesis; LPS O-antigen biosynthesis. Catalyzes the transfer of the GlcNAc-1-phosphate moiety from UDP-GlcNAc onto the carrier lipid undecaprenyl phosphate (C55-P), yielding GlcNAc-pyrophosphoryl-undecaprenyl (GlcNAc-PP-C55). This chain is Undecaprenyl-phosphate alpha-N-acetylglucosaminyl 1-phosphate transferase, found in Haemophilus influenzae (strain ATCC 51907 / DSM 11121 / KW20 / Rd).